The following is a 328-amino-acid chain: Ferredoxin--NADP reductase 2 (328 aa).

FAD-binding residues include Thr16, Glu35, Gln43, Tyr48, Ile88, Phe123, Asp284, and Thr325.

The protein belongs to the ferredoxin--NADP reductase type 2 family. In terms of assembly, homodimer. The cofactor is FAD.

The catalysed reaction is 2 reduced [2Fe-2S]-[ferredoxin] + NADP(+) + H(+) = 2 oxidized [2Fe-2S]-[ferredoxin] + NADPH. The polypeptide is Ferredoxin--NADP reductase 2 (Oceanobacillus iheyensis (strain DSM 14371 / CIP 107618 / JCM 11309 / KCTC 3954 / HTE831)).